We begin with the raw amino-acid sequence, 298 residues long: Protoheme IX farnesyltransferase (298 aa).

The next 9 membrane-spanning stretches (helical) occupy residues 26–46 (VVSLIVFTAVIGMFLSVPGAV), 52–72 (IFGTVGISLVAGAAAALNCLV), 93–113 (VSVPETLFFLVLIGGFGLFML), 120–140 (LTMWLTLGTFVGYAIIYTVIL), 148–168 (IVIGGASGAMPPVLGWAAVTG), 174–194 (ALLLFLIIFAWTPPHFWALAL), 219–239 (LHVLLYTIILCVVTVLPYLTQ), 241–261 (SGLIYLGSVLILDAIFFYYAI), and 278–298 (YSIAYLALLFTALLVDHYFYF).

It belongs to the UbiA prenyltransferase family. Protoheme IX farnesyltransferase subfamily.

It is found in the cell inner membrane. The enzyme catalyses heme b + (2E,6E)-farnesyl diphosphate + H2O = Fe(II)-heme o + diphosphate. It functions in the pathway porphyrin-containing compound metabolism; heme O biosynthesis; heme O from protoheme: step 1/1. Converts heme B (protoheme IX) to heme O by substitution of the vinyl group on carbon 2 of heme B porphyrin ring with a hydroxyethyl farnesyl side group. This chain is Protoheme IX farnesyltransferase, found in Nitrosomonas europaea (strain ATCC 19718 / CIP 103999 / KCTC 2705 / NBRC 14298).